A 165-amino-acid chain; its full sequence is Transcriptional repressor NrdR (165 aa).

Residues 3–34 (CPFCRNPDSRVVDSRMADDGSAIRRRRQCPEC) fold into a zinc finger. The region spanning 46-136 (LTVIKRSGVG…VYQAFESLED (91 aa)) is the ATP-cone domain.

Belongs to the NrdR family. Zn(2+) is required as a cofactor.

In terms of biological role, negatively regulates transcription of bacterial ribonucleotide reductase nrd genes and operons by binding to NrdR-boxes. The polypeptide is Transcriptional repressor NrdR (Arthrobacter sp. (strain FB24)).